A 668-amino-acid chain; its full sequence is Exoribonuclease 2 (668 aa).

The 329-residue stretch at 193–521 (RIEMTHVPFV…INHRMLKAVI (329 aa)) folds into the RNB domain. The S1 motif domain maps to 568-650 (QTCFTGEIFD…ENRSLVAKPT (83 aa)).

The protein belongs to the RNR ribonuclease family. RNase II subfamily.

The protein localises to the cytoplasm. It carries out the reaction Exonucleolytic cleavage in the 3'- to 5'-direction to yield nucleoside 5'-phosphates.. In terms of biological role, involved in mRNA degradation. Hydrolyzes single-stranded polyribonucleotides processively in the 3' to 5' direction. The sequence is that of Exoribonuclease 2 from Vibrio parahaemolyticus serotype O3:K6 (strain RIMD 2210633).